The sequence spans 449 residues: Glucose-6-phosphate isomerase (449 aa).

The Proton donor role is filled by E291. Residues H312 and K426 contribute to the active site.

The protein belongs to the GPI family.

Its subcellular location is the cytoplasm. It catalyses the reaction alpha-D-glucose 6-phosphate = beta-D-fructose 6-phosphate. The protein operates within carbohydrate biosynthesis; gluconeogenesis. It participates in carbohydrate degradation; glycolysis; D-glyceraldehyde 3-phosphate and glycerone phosphate from D-glucose: step 2/4. In terms of biological role, catalyzes the reversible isomerization of glucose-6-phosphate to fructose-6-phosphate. This is Glucose-6-phosphate isomerase from Clostridium botulinum (strain Alaska E43 / Type E3).